A 255-amino-acid polypeptide reads, in one-letter code: Ribosomal RNA small subunit methyltransferase A (255 aa).

S-adenosyl-L-methionine contacts are provided by Asn-13, Leu-15, Gly-40, Glu-61, Asp-85, and Asn-103.

Belongs to the class I-like SAM-binding methyltransferase superfamily. rRNA adenine N(6)-methyltransferase family. RsmA subfamily.

Its subcellular location is the cytoplasm. It catalyses the reaction adenosine(1518)/adenosine(1519) in 16S rRNA + 4 S-adenosyl-L-methionine = N(6)-dimethyladenosine(1518)/N(6)-dimethyladenosine(1519) in 16S rRNA + 4 S-adenosyl-L-homocysteine + 4 H(+). Specifically dimethylates two adjacent adenosines (A1518 and A1519) in the loop of a conserved hairpin near the 3'-end of 16S rRNA in the 30S particle. May play a critical role in biogenesis of 30S subunits. The chain is Ribosomal RNA small subunit methyltransferase A from Dechloromonas aromatica (strain RCB).